A 230-amino-acid polypeptide reads, in one-letter code: Ion-translocating oxidoreductase complex subunit E (230 aa).

A run of 6 helical transmembrane segments spans residues 18–38 (ALVQ…ATNA), 39–59 (LGLG…VSAL), 63–83 (TPAE…VSAV), 86–106 (LINA…PLIV), 125–145 (WLSA…MFVL), and 182–202 (PFLL…MLAV).

The protein belongs to the NqrDE/RnfAE family. As to quaternary structure, the complex is composed of six subunits: RsxA, RsxB, RsxC, RsxD, RsxE and RsxG.

The protein localises to the cell inner membrane. Its function is as follows. Part of a membrane-bound complex that couples electron transfer with translocation of ions across the membrane. Required to maintain the reduced state of SoxR. The polypeptide is Ion-translocating oxidoreductase complex subunit E (Salmonella dublin (strain CT_02021853)).